Here is a 79-residue protein sequence, read N- to C-terminus: Cytochrome c-551 (79 aa).

Residues 1 to 14 (DGQSIYESGTSPTC) show a composition bias toward polar residues. A disordered region spans residues 1-35 (DGQSIYESGTSPTCASCHDRGTAGAPKINEPGDWD). The heme c site is built by cysteine 14, cysteine 17, histidine 18, and methionine 55.

In terms of processing, binds 1 heme c group covalently per subunit.

This Halorhodospira halochloris (Ectothiorhodospira halochloris) protein is Cytochrome c-551.